Here is a 204-residue protein sequence, read N- to C-terminus: SOSS complex subunit B homolog (204 aa).

Residues 24–94 constitute a DNA-binding region (OB); the sequence is IVLEVGVATV…TLYSGKNGEV (71 aa). The interval 115–204 is disordered; the sequence is RAEQQAVANP…GRGGLKGERR (90 aa). Low complexity-rich tracts occupy residues 122–131 and 139–183; these read ANPAATPAGL and GLPA…QTTT. Residues 187–198 show a composition bias toward gly residues; the sequence is TRGGRGGGGRGG.

This sequence belongs to the SOSS-B family.

The chain is SOSS complex subunit B homolog from Drosophila melanogaster (Fruit fly).